The sequence spans 338 residues: Ornithine carbamoyltransferase, catabolic (338 aa).

Residues 65 to 68, Gln92, Arg116, and 143 to 146 each bind carbamoyl phosphate; these read STRT and HPTQ. Residues Asn175, Asp239, and 243–244 each bind L-ornithine; that span reads SM. Carbamoyl phosphate is bound by residues 280–281 and Arg325; that span reads CL.

This sequence belongs to the aspartate/ornithine carbamoyltransferase superfamily. OTCase family.

The protein localises to the cytoplasm. It carries out the reaction carbamoyl phosphate + L-ornithine = L-citrulline + phosphate + H(+). The protein operates within amino-acid degradation; L-arginine degradation via ADI pathway; carbamoyl phosphate from L-arginine: step 2/2. Reversibly catalyzes the transfer of the carbamoyl group from carbamoyl phosphate (CP) to the N(epsilon) atom of ornithine (ORN) to produce L-citrulline. This chain is Ornithine carbamoyltransferase, catabolic, found in Treponema denticola (strain ATCC 35405 / DSM 14222 / CIP 103919 / JCM 8153 / KCTC 15104).